A 687-amino-acid polypeptide reads, in one-letter code: Glycine--tRNA ligase beta subunit (687 aa).

The protein belongs to the class-II aminoacyl-tRNA synthetase family. In terms of assembly, tetramer of two alpha and two beta subunits.

It localises to the cytoplasm. The catalysed reaction is tRNA(Gly) + glycine + ATP = glycyl-tRNA(Gly) + AMP + diphosphate. The polypeptide is Glycine--tRNA ligase beta subunit (Neisseria meningitidis serogroup A / serotype 4A (strain DSM 15465 / Z2491)).